Consider the following 94-residue polypeptide: Large ribosomal subunit protein bL27 (94 aa).

A propeptide spanning residues 1 to 9 (MLELNLQLF) is cleaved from the precursor. The tract at residues 12-33 (KKGGGSTSNGRDSQAKRLGAKA) is disordered.

Belongs to the bacterial ribosomal protein bL27 family. The N-terminus is cleaved by ribosomal processing cysteine protease Prp.

The sequence is that of Large ribosomal subunit protein bL27 from Lactococcus lactis subsp. cremoris (strain MG1363).